The chain runs to 414 residues: MNTSRLFSLLFQGSLVKRIAAGLVLGIVVALISAPLQETIGFNLAEKVGVLGTIFVKALRAVAPILIFFLVMAALANRKIGTKSNMKEIIVLYLLGTFLAAFVAVIAGFAFPTEVVLAAKEDSSSAPQAVGQVLLTLILNVVDNPLNAIFKANFIGVLAWSIGLGLALRHASDATKNVLSDFAEGVSKIVHVIISFAPFGVFGLVAETLSDKGLVALGGYVQLLAVLIGTMLFTAFVVNPILVYWKIRRNPYPLVWTCVRESGVTAFFTRSSAANIPVNIELAKRLNLDEETYSVSIPLGANINMAGAAITITILTLAAVHTLGLEVSFVSALLLSIVAALCACGASGVAGGSLLLIPLACSLFGISDDVAAQMIGVGFIIGILQDSTETALNSSTDVLFTAAVCMEEERKNAA.

Transmembrane regions (helical) follow at residues 22-42 (GLVL…TIGF), 54-74 (IFVK…VMAA), 89-109 (IIVL…IAGF), 148-168 (AIFK…GLAL), 189-209 (IVHV…AETL), 223-243 (LLAV…PILV), 305-325 (MAGA…TLGL), and 337-357 (IVAA…LLLI).

Belongs to the dicarboxylate/amino acid:cation symporter (DAACS) (TC 2.A.23) family.

It localises to the cell inner membrane. The enzyme catalyses L-serine(in) + Na(+)(in) = L-serine(out) + Na(+)(out). The catalysed reaction is L-threonine(in) + Na(+)(in) = L-threonine(out) + Na(+)(out). In terms of biological role, involved in the import of serine and threonine into the cell, with the concomitant import of sodium (symport system). This chain is Serine/threonine transporter SstT, found in Haemophilus influenzae (strain PittEE).